The following is a 90-amino-acid chain: Elongation factor 1-beta (90 aa).

It belongs to the EF-1-beta/EF-1-delta family.

Functionally, promotes the exchange of GDP for GTP in EF-1-alpha/GDP, thus allowing the regeneration of EF-1-alpha/GTP that could then be used to form the ternary complex EF-1-alpha/GTP/AAtRNA. The protein is Elongation factor 1-beta (ef1b) of Aeropyrum pernix (strain ATCC 700893 / DSM 11879 / JCM 9820 / NBRC 100138 / K1).